The following is a 251-amino-acid chain: Ly6/PLAUR domain-containing protein 5 (251 aa).

Positions 1 to 25 (MAMGVPRVILLCLFGAALCLTGSQA) are cleaved as a signal peptide. N-linked (GlcNAc...) asparagine glycosylation is found at Asn-120 and Asn-174. Residues 135–214 (CYACIGVHQD…GSCCEGYLCN (80 aa)) enclose the UPAR/Ly6 domain. Ala-225 carries GPI-anchor amidated alanine lipidation. Positions 226–251 (SATTPPRALQVLALLLPVLLLVGLSA) are cleaved as a propeptide — removed in mature form.

The protein localises to the cell membrane. This is Ly6/PLAUR domain-containing protein 5 (LYPD5) from Homo sapiens (Human).